A 417-amino-acid polypeptide reads, in one-letter code: MAEVRNYTFNFGPQHPAAHGVLRLIVEVDGEVIQRIDPHIGLLHRATEKLAESKPYNQTIGYMDRLDYVSMMANEHGYVLAIEKLLGIEPPIRAKYIRTMFDEITRILNHLLWLGAHALDVGAMTVFLYCFREREDLMDCYEAVSGARMHATYYRPGGVYRDLPDSMPKYKPSRWHNEKAVKKMNEAREGSLLDFIWDFTARFPNLIDEYESLLTDNRIWKQRTVGIGVVSAERALQLGFTGPMLRASGVEWDLRKKQPYAAYDRVDFDIPIGREGDCYDRYLVRIEEMRQSNRIIRQCVEWLRKNPGPVIIDDYKIVPPQREVMKRDMEALIHHFKLFTEGYIVPEGEAYAAVEQPKGEFGVYIVSDGANKPYRVKVRAASYPHLAAMNEMCRGHMIADLVAIISSIDIVFGEIDR.

The protein belongs to the complex I 49 kDa subunit family. In terms of assembly, NDH-1 is composed of 14 different subunits. Subunits NuoB, C, D, E, F, and G constitute the peripheral sector of the complex.

It is found in the cell inner membrane. It carries out the reaction a quinone + NADH + 5 H(+)(in) = a quinol + NAD(+) + 4 H(+)(out). Its function is as follows. NDH-1 shuttles electrons from NADH, via FMN and iron-sulfur (Fe-S) centers, to quinones in the respiratory chain. The immediate electron acceptor for the enzyme in this species is believed to be ubiquinone. Couples the redox reaction to proton translocation (for every two electrons transferred, four hydrogen ions are translocated across the cytoplasmic membrane), and thus conserves the redox energy in a proton gradient. The polypeptide is NADH-quinone oxidoreductase subunit D (Coxiella burnetii (strain Dugway 5J108-111)).